A 349-amino-acid chain; its full sequence is Diacylglycerol O-acyltransferase 2B (349 aa).

A run of 2 helical transmembrane segments spans residues 44–64 and 114–134; these read ICLI…ILIM and YIMS…NFAT.

This sequence belongs to the diacylglycerol acyltransferase family.

The protein resides in the endoplasmic reticulum membrane. The catalysed reaction is an acyl-CoA + a 1,2-diacyl-sn-glycerol = a triacyl-sn-glycerol + CoA. It participates in glycerolipid metabolism; triacylglycerol biosynthesis. Its function is as follows. Catalyzes the terminal and only committed step in triacylglycerol synthesis by using diacylglycerol and fatty acyl CoA as substrates. Required for storage lipid synthesis. The sequence is that of Diacylglycerol O-acyltransferase 2B (DGAT2B) from Umbelopsis ramanniana (Oleaginous fungus).